We begin with the raw amino-acid sequence, 310 residues long: Protoheme IX farnesyltransferase (310 aa).

8 consecutive transmembrane segments (helical) span residues 31–51 (VIELLLVTAIPAMLLADRGSV), 53–73 (PLLILNTLIGGMLAAAGANTL), 102–122 (NALIFGLVLSVGSFFWLWGTS), 124–144 (LLSGLLAVATIAFYVFVYTLL), 149–169 (TSQNVVWGGAAGCMPVMIGWS), 170–190 (AVTGTIQWPALVMFAIIFFWT), 242–262 (LATGWLYASVAVLAGTWFLVM), and 289–309 (LAVVFAALAVDSVLALPTLLG).

Belongs to the UbiA prenyltransferase family. Protoheme IX farnesyltransferase subfamily.

It localises to the cell membrane. It catalyses the reaction heme b + (2E,6E)-farnesyl diphosphate + H2O = Fe(II)-heme o + diphosphate. Its pathway is porphyrin-containing compound metabolism; heme O biosynthesis; heme O from protoheme: step 1/1. Functionally, converts heme B (protoheme IX) to heme O by substitution of the vinyl group on carbon 2 of heme B porphyrin ring with a hydroxyethyl farnesyl side group. The chain is Protoheme IX farnesyltransferase from Mycobacterium sp. (strain JLS).